Here is a 362-residue protein sequence, read N- to C-terminus: Histidine protein methyltransferase 1 homolog (362 aa).

The interval 28-89 is disordered; sequence KSQKGKEDKN…ACEKQPSLKP (62 aa). The span at 55–73 shows a compositional bias: polar residues; it reads SLGSAASSEDTDSPPSTAD. Ser-62 and Ser-67 each carry phosphoserine. His-144 bears the Tele-methylhistidine mark. S-adenosyl-L-methionine contacts are provided by residues 158–162, Gly-185, and 206–208; these read IWECT and QDY. Positions 237–243 match the Nuclear localization signal motif; it reads PAGKRQR. Residues 259–261 and Ser-283 contribute to the S-adenosyl-L-methionine site; that span reads GEW.

Belongs to the methyltransferase superfamily. METTL18 family. Interacts with GRWD1 and members of the heat shock protein 90 and 70 families; these proteins may possibly be methylation substrates for the enzyme. In terms of processing, monomethylated at His-144 through automethylation. Automethylation at His-144 positively regulates the methyltransferase activity toward RPL3. Probably methylated on other residues.

The protein resides in the cytoplasm. Its subcellular location is the cytosol. It is found in the nucleus. It localises to the nucleolus. The catalysed reaction is L-histidyl-[protein] + S-adenosyl-L-methionine = N(tele)-methyl-L-histidyl-[protein] + S-adenosyl-L-homocysteine + H(+). Protein-L-histidine N-tele-methyltransferase that specifically monomethylates RPL3, thereby regulating translation elongation. Histidine methylation of RPL3 regulates translation elongation by slowing ribosome traversal on tyrosine codons: slower elongation provides enough time for proper folding of synthesized proteins and prevents cellular aggregation of tyrosine-rich proteins. The protein is Histidine protein methyltransferase 1 homolog of Rattus norvegicus (Rat).